A 154-amino-acid chain; its full sequence is Universal stress protein Sll1388 (154 aa).

The protein belongs to the universal stress protein A family.

This chain is Universal stress protein Sll1388, found in Synechocystis sp. (strain ATCC 27184 / PCC 6803 / Kazusa).